Here is a 432-residue protein sequence, read N- to C-terminus: Solute carrier family 38 member 8 (432 aa).

A run of 11 helical transmembrane segments spans residues 29–49 (AVFI…PWAF), 59–79 (FLVA…LGYA), 103–123 (LCEI…LRVI), 144–164 (AAQN…LSAL), 175–195 (ILGT…YYLW), 215–237 (VFSV…SIYC), 253–273 (LSLL…FLTF), 292–312 (IIVA…IVLF), 345–365 (LPLT…LPDL), 368–388 (IISI…GLCL), and 409–429 (GILS…VAMV).

It belongs to the amino acid/polyamine transporter 2 family. As to expression, expressed in neurons located in the gray matter. Highly expressed in thalamus, hypothalamus, amygdala and pons. Expressed in the CA3 area of hippocampus and in the Purkinje layer of the cerebellum (at protein level). Expressed in the eye.

It is found in the membrane. It localises to the cytoplasm. The protein localises to the cell cortex. Its subcellular location is the cell projection. The protein resides in the axon. The catalysed reaction is L-glutamine(out) = L-glutamine(in). The enzyme catalyses L-alanine(in) = L-alanine(out). It carries out the reaction L-histidine(out) = L-histidine(in). It catalyses the reaction L-aspartate(out) = L-aspartate(in). The catalysed reaction is L-arginine(in) = L-arginine(out). The enzyme catalyses L-leucine(in) = L-leucine(out). Functionally, electrogenic sodium-dependent amino acid transporter with a preference for L-glutamine, L-alanine, L-histidine, L-aspartate and L-arginine. May facilitate glutamine uptake in both excitatory and inhibitory neurons. The transport mechanism and stoichiometry remain to be elucidated. This chain is Solute carrier family 38 member 8, found in Mus musculus (Mouse).